We begin with the raw amino-acid sequence, 90 residues long: UPF0386 protein Rru_A2144 (90 aa).

The protein belongs to the UPF0386 family.

In Rhodospirillum rubrum (strain ATCC 11170 / ATH 1.1.1 / DSM 467 / LMG 4362 / NCIMB 8255 / S1), this protein is UPF0386 protein Rru_A2144.